A 164-amino-acid chain; its full sequence is 2-C-methyl-D-erythritol 2,4-cyclodiphosphate synthase (164 aa).

Residues aspartate 9 and histidine 11 each coordinate a divalent metal cation. 4-CDP-2-C-methyl-D-erythritol 2-phosphate contacts are provided by residues 9–11 (DVH) and 35–36 (HS). Histidine 43 contributes to the a divalent metal cation binding site. Residues 57-59 (DIG), 62-66 (FPDTD), 133-136 (TTTE), phenylalanine 140, and arginine 143 contribute to the 4-CDP-2-C-methyl-D-erythritol 2-phosphate site.

Belongs to the IspF family. In terms of assembly, homotrimer. A divalent metal cation is required as a cofactor.

It carries out the reaction 4-CDP-2-C-methyl-D-erythritol 2-phosphate = 2-C-methyl-D-erythritol 2,4-cyclic diphosphate + CMP. It participates in isoprenoid biosynthesis; isopentenyl diphosphate biosynthesis via DXP pathway; isopentenyl diphosphate from 1-deoxy-D-xylulose 5-phosphate: step 4/6. Involved in the biosynthesis of isopentenyl diphosphate (IPP) and dimethylallyl diphosphate (DMAPP), two major building blocks of isoprenoid compounds. Catalyzes the conversion of 4-diphosphocytidyl-2-C-methyl-D-erythritol 2-phosphate (CDP-ME2P) to 2-C-methyl-D-erythritol 2,4-cyclodiphosphate (ME-CPP) with a corresponding release of cytidine 5-monophosphate (CMP). The protein is 2-C-methyl-D-erythritol 2,4-cyclodiphosphate synthase of Syntrophotalea carbinolica (strain DSM 2380 / NBRC 103641 / GraBd1) (Pelobacter carbinolicus).